A 199-amino-acid chain; its full sequence is Recombination protein RecR (199 aa).

A C4-type zinc finger spans residues 57–72 (CQSCRTYTEETLCPIC). Residues 81–176 (STICVVETPA…MISRIAHGVP (96 aa)) enclose the Toprim domain.

This sequence belongs to the RecR family.

Functionally, may play a role in DNA repair. It seems to be involved in an RecBC-independent recombinational process of DNA repair. It may act with RecF and RecO. This is Recombination protein RecR from Shewanella baltica (strain OS195).